The sequence spans 410 residues: Cytochrome P450 monooxygenase mpsF (410 aa).

C355 is a heme binding site.

Belongs to the cytochrome P450 family. Heme is required as a cofactor.

The protein operates within secondary metabolite biosynthesis. Cytochrome P450 monooxygenase; part of the gene cluster that mediates the biosynthesis of macrophasetins, 3-decalinoyltetramic acids (DTAs) which feature a tetramate (pyrrolidine-2,4-dione) unit connected to a decalin fragment and that have potent bioactivities. The PKS-NRPS mpsA together with its associated enoylreductase partner mpsG incorporate one unit of acetyl-CoA, seven units of malonyl-CoA, and one unit of L-alanine to assemble the linear tetramic acid intermediate corresponding to the backbone of macrophasetins. Without the Diels-Alderase mpsD, the mpsA/G product can undergo the non-enzymatic intramolecular Diels-Alder (IMDA) reaction to generate both macrophasetin A and macrophasetin B. Catalyzed by mpsD, the linear tetramic acid intermediate is thoroughly converted to macrophasetin A via the endo-IMDA reaction in a regioselective and stereoselective manner. Finally, the cytochrome P450 monooxygenase mpsF catalyzes the hydroxylation at C20 to yield the end product macrophasetin C. This chain is Cytochrome P450 monooxygenase mpsF, found in Macrophomina phaseolina (strain MS6) (Charcoal rot fungus).